Reading from the N-terminus, the 1139-residue chain is MPTEARDNNRHIHLGKVRDPHHQHAQRFCSNRISTCKYNGFSFLPRFLYEQFRRYNNIFFLAIALLQQIPDVSPTGRYTTAVPFLIILSVSALKEIFEDVKRRRSDNKVNAFSVEILVDGHWIEKQWKDVSVGDFIRIDNDSLFPADLLLLASSEQQGMAYIETSNLDGETNLKIKQALDITSTMTSPEKLSQFESEITCEPPSRHVNEFNGNIEINGVARHFGIDQLLLRGARLKNTAWIFGAVIYTGHDSKLLMNSKRAPLKSGTIDVQTNYRIIFLFFVLVALALISATGSEIWRGNNIPQAWYLSFLEHDPKGSFLWGVLTFFILYNNLIPISLQVTLEVVRFFQAIYINNDIEMYDVNSDSCAIARTSNLNEELGQVKFIMSDKTGTLTRNVMKFKRLSIGSRNYGNNEDDEFADASLIEDYRQGDEHSTSILEVLKMMAVCHTVVPENKDGQLIYQSSSPDEAALVRGAASQSVSFHTRQPQKVICNVFGEDETIEILDVIDFTSDRKRMSVIVRDGAGGDIKLYTKGADTVIFERLEHGKEQEEAVEYCTEHLEDYASFGYRTLCFSMRHLTEQEYSQWAPEYKKAILAIDNRAKLLADAAEKLERNMILVGATAIEDKLQEWVPETIQALMAADIRVWMLTGDKRETAINIAHSCALCHTNTELLIVDKTTYEETYQKLEQFVARAIELEKQEKGFAMVIDGKSLLHALTGEARKHFGDLALRCHAVVCCRMSPMQKAEVVEMVRKLAKHVVLAIGDGANDVAMIQAANVGVGISGEEGLQAASASDYAIPRFHFLRRLLLVHGAWNHDRSVKVILYSFYKNICLYIIELWFAMFSAWSGQTIFERWTIGMFNVIFTAWPPVVLGLFDHPVPAEQIMKYPALYASFQNRAFSIGNFSLWIGLAIVHSLSLFFLTYATMEHQVVWDNGLTGGWLMLGNCAYTFVVATVCFKALLECDSWTWPVVVACIGSIGLWIVFVIVYSLVFPHIGGIGADMAGMAAIMMSSYTFWLALLFIPLATLLWDLVIKSLFTIAMPTPRELAVMYNKRTTSFNGFERLASYSSNVLENMRLLTSSLRGSTTGSTRSRTASEASLALAEQTRYGFAFSQDESSAVAQTELIRNVDSTREKPTGR.

Helical transmembrane passes span 78–98 (YTTA…EIFE), 276–296 (IIFL…GSEI), and 318–338 (SFLW…PISL). Residue Asp-388 is the 4-aspartylphosphate intermediate of the active site. The next 6 membrane-spanning stretches (helical) occupy residues 831–851 (ICLY…GQTI), 855–875 (WTIG…LGLF), 901–921 (IGNF…LFFL), 935–955 (GLTG…VATV), 972–992 (VACI…SLVF), and 1013–1033 (YTFW…DLVI).

The protein belongs to the cation transport ATPase (P-type) (TC 3.A.3) family. Type IV subfamily.

The protein resides in the cell membrane. It localises to the early endosome membrane. Its subcellular location is the recycling endosome membrane. The enzyme catalyses ATP + H2O + phospholipidSide 1 = ADP + phosphate + phospholipidSide 2.. It carries out the reaction a 1,2-diacyl-sn-glycero-3-phospho-L-serine(out) + ATP + H2O = a 1,2-diacyl-sn-glycero-3-phospho-L-serine(in) + ADP + phosphate + H(+). Its function is as follows. Transports phosphatidylserine from the outer to the inner leaflet of the plasma membrane, thereby maintaining the enrichment of this phospholipid in the inner leaflet. Ectopic exposure of phosphatidylserine on the cell surface may result in removal of living cells by neighboring phagocytes. Regulation of the phosphatidylserine distribution in plasma membranes is likely to help in the maintenance and control of the membrane surface charge. Plays a role in the formation of the tubular membrane structure and in membrane trafficking and is specifically involved in the recycling and degradation of endocytic cargo, likely with its chaperone protein chat-1. The sequence is that of Phospholipid-transporting ATPase tat-1 (tat-1) from Caenorhabditis elegans.